The sequence spans 125 residues: Ribonuclease P protein component (125 aa).

Belongs to the RnpA family. In terms of assembly, consists of a catalytic RNA component (M1 or rnpB) and a protein subunit.

It carries out the reaction Endonucleolytic cleavage of RNA, removing 5'-extranucleotides from tRNA precursor.. Functionally, RNaseP catalyzes the removal of the 5'-leader sequence from pre-tRNA to produce the mature 5'-terminus. It can also cleave other RNA substrates such as 4.5S RNA. The protein component plays an auxiliary but essential role in vivo by binding to the 5'-leader sequence and broadening the substrate specificity of the ribozyme. The polypeptide is Ribonuclease P protein component (Ruegeria pomeroyi (strain ATCC 700808 / DSM 15171 / DSS-3) (Silicibacter pomeroyi)).